The sequence spans 372 residues: tRNA-specific 2-thiouridylase MnmA (372 aa).

ATP is bound by residues Gly9–Ser16 and Met35. Positions Asn95–Asp97 are interaction with target base in tRNA. Cys100 (nucleophile) is an active-site residue. An intrachain disulfide couples Cys100 to Cys198. Gly124 is an ATP binding site. The interval Lys148–Gln150 is interaction with tRNA. Cys198 acts as the Cysteine persulfide intermediate in catalysis. The interval Arg317 to Tyr318 is interaction with tRNA.

Belongs to the MnmA/TRMU family.

It is found in the cytoplasm. It carries out the reaction S-sulfanyl-L-cysteinyl-[protein] + uridine(34) in tRNA + AH2 + ATP = 2-thiouridine(34) in tRNA + L-cysteinyl-[protein] + A + AMP + diphosphate + H(+). Functionally, catalyzes the 2-thiolation of uridine at the wobble position (U34) of tRNA, leading to the formation of s(2)U34. The polypeptide is tRNA-specific 2-thiouridylase MnmA (Delftia acidovorans (strain DSM 14801 / SPH-1)).